We begin with the raw amino-acid sequence, 444 residues long: Prenyltransferase phnF (444 aa).

The protein belongs to the tryptophan dimethylallyltransferase family.

It carries out the reaction 2,3,4,7,9-pentahydroxy-6-methyl-1H-phenalen-1-one + dimethylallyl diphosphate = 2,4,7,9-tetrahydroxy-6-methyl-8-(2-methylbut-3-en-2-yl)-1-oxo-1H-phenalen-3-ol + diphosphate. It participates in secondary metabolite biosynthesis. In terms of biological role, prenyltransferase; part of the gene cluster that mediates the biosynthesis of phenalenones such as herqueinone, compounds that have been reported to treat tumors, bacterial infections and/or mycoses, and rheumatic diseases. The non-reducing polyketide synthase phnA synthesizes the heptaketide backbone and cyclizes it into the angular, hemiketal-containing naphtho-gamma-pyrone prephenalenone. The product template (PT) domain of phnA catalyzes only the C4-C9 aldol condensation, which is unprecedented among known PT domains. The transformation of prephenalenone to phenalenones requires an FAD-dependent monooxygenase phnB, which catalyzes the C2 aromatic hydroxylation of prephenalenone and ring opening of the gamma-pyrone ring simultaneously. Subsequent intramolecular deprotonation of C3 phenolic oxygen accelerates phenalenone ring closure to yield the tricyclic phenalenone core with a C2 hydroxylation. The prenyltransferase phnF further catalyzes reverse C-prenylation of phenalenone by direct electrophilic substitution at C6, or possibly via first a forward O-prenylation of a neighboring phenol in phenalenone, followed by a Claisen rearrangement. The hydroalkoxylation enzyme phnH catalyzes the 5-exo-trig cyclization via acid catalysis after the spontaneous deprotonation of 7-OH, which leads to the formation of the dihydrobenzofuran atrovenetin. Atrovenetin is further converted to deoxyherqueinone by the O-methyltransferase phnC which can methylate C2-OH to stabilize the northern portion of the phenalenone core. Finally, the oxidoreductase phnG converts deoxyherqueinone to herqueinone via C6 hydroxylation. This is Prenyltransferase phnF from Penicillium herquei.